A 365-amino-acid chain; its full sequence is Carbamoyl phosphate synthase small chain (365 aa).

CPSase regions lie at residues 1-166 (MKRQ…PSPG) and 1-169 (MKRQ…GRGH). L-glutamine-binding residues include serine 45, glycine 218, and glycine 220. Residues 170–357 (RVVLVDFGMK…LTMIENFKKE (188 aa)) form the Glutamine amidotransferase type-1 domain. Cysteine 245 functions as the Nucleophile in the catalytic mechanism. 5 residues coordinate L-glutamine: leucine 246, glutamine 249, asparagine 287, glycine 289, and tyrosine 290. Active-site residues include histidine 330 and glutamate 332.

This sequence belongs to the CarA family. In terms of assembly, composed of two chains; the small (or glutamine) chain promotes the hydrolysis of glutamine to ammonia, which is used by the large (or ammonia) chain to synthesize carbamoyl phosphate. Tetramer of heterodimers (alpha,beta)4.

It carries out the reaction hydrogencarbonate + L-glutamine + 2 ATP + H2O = carbamoyl phosphate + L-glutamate + 2 ADP + phosphate + 2 H(+). The catalysed reaction is L-glutamine + H2O = L-glutamate + NH4(+). The protein operates within amino-acid biosynthesis; L-arginine biosynthesis; carbamoyl phosphate from bicarbonate: step 1/1. Its pathway is pyrimidine metabolism; UMP biosynthesis via de novo pathway; (S)-dihydroorotate from bicarbonate: step 1/3. In terms of biological role, small subunit of the glutamine-dependent carbamoyl phosphate synthetase (CPSase). CPSase catalyzes the formation of carbamoyl phosphate from the ammonia moiety of glutamine, carbonate, and phosphate donated by ATP, constituting the first step of 2 biosynthetic pathways, one leading to arginine and/or urea and the other to pyrimidine nucleotides. The small subunit (glutamine amidotransferase) binds and cleaves glutamine to supply the large subunit with the substrate ammonia. The polypeptide is Carbamoyl phosphate synthase small chain (Bacillus cereus (strain ATCC 14579 / DSM 31 / CCUG 7414 / JCM 2152 / NBRC 15305 / NCIMB 9373 / NCTC 2599 / NRRL B-3711)).